The primary structure comprises 737 residues: Photosystem I P700 chlorophyll a apoprotein A2 (737 aa).

The next 8 membrane-spanning stretches (helical) occupy residues 46 to 69 (LFST…FHIA), 135 to 158 (LYQG…LHLQ), 175 to 199 (LNHH…HVAI), 273 to 291 (IAHH…GHMY), 333 to 356 (LHFQ…QHMY), 372 to 398 (AALY…IFFI), 420 to 442 (AIIS…LYVH), and 520 to 538 (FLVH…LILV). [4Fe-4S] cluster-binding residues include Cys-562 and Cys-571. The next 2 membrane-spanning stretches (helical) occupy residues 578 to 599 (AFYL…YWHW) and 646 to 668 (LAVW…MFLI). His-657, Met-665, and Tyr-673 together coordinate chlorophyll a. Trp-674 lines the phylloquinone pocket. The chain crosses the membrane as a helical span at residues 710-730 (VVGLAHFSVGYVLTYAAFLIA).

This sequence belongs to the PsaA/PsaB family. The PsaA/B heterodimer binds the P700 chlorophyll special pair and subsequent electron acceptors. PSI consists of a core antenna complex that captures photons, and an electron transfer chain that converts photonic excitation into a charge separation. The cyanobacterial PSI reaction center is composed of one copy each of PsaA,B,C,D,E,F,I,J,K,L,M and X, and forms trimeric complexes. PSI electron transfer chain: 5 chlorophyll a, 1 chlorophyll a', 2 phylloquinones and 3 4Fe-4S clusters. PSI core antenna: 90 chlorophyll a, 22 carotenoids, 3 phospholipids and 1 galactolipid. P700 is a chlorophyll a/chlorophyll a' dimer, A0 is one or more chlorophyll a, A1 is one or both phylloquinones and FX is a shared 4Fe-4S iron-sulfur center. is required as a cofactor.

The protein localises to the cellular thylakoid membrane. It catalyses the reaction reduced [plastocyanin] + hnu + oxidized [2Fe-2S]-[ferredoxin] = oxidized [plastocyanin] + reduced [2Fe-2S]-[ferredoxin]. Functionally, psaA and PsaB bind P700, the primary electron donor of photosystem I (PSI), as well as the electron acceptors A0, A1 and FX. PSI is a plastocyanin/cytochrome c6-ferredoxin oxidoreductase, converting photonic excitation into a charge separation, which transfers an electron from the donor P700 chlorophyll pair to the spectroscopically characterized acceptors A0, A1, FX, FA and FB in turn. Oxidized P700 is reduced on the lumenal side of the thylakoid membrane by plastocyanin or cytochrome c6. This is Photosystem I P700 chlorophyll a apoprotein A2 from Parasynechococcus marenigrum (strain WH8102).